The sequence spans 281 residues: Oxidase pynE (281 aa).

The protein belongs to the avfA family.

The protein operates within secondary metabolite biosynthesis. In terms of biological role, oxidase; part of the gene cluster that mediates the biosynthesis of pyranonigrins, a family of antioxidative compounds. The first step of pyranonigrins biosynthesis is performed by the hybrid PKS-NRPS synthetase that condenses 6 malonyl-CoA units to an acetyl starter unit, to form a 1,3,5-trioxotetradecane-6,8-dienyl-ACP. The enoyl reductase (ER) domain of pynA is likely to be functional during the first two rounds of polyketide chain extension, to generate the saturated C-C bonds of the alkyl side chain. PynA subsequently forms the amide bond between the acyl chain and L-serine. Although pynA has a terminal reductase domain, it appears to require the thioesterase pynI for the release of the straight-chain intermediate from pynA via the formation of a tetramic acid pyranonigrin J. The methyltransferase pynC then coverts pyranonigrin J to pyranonigrin I via N-methylation. The FAD-dependent monooxygenase pynG catalyzes an epoxidation-mediated cyclization to form the dihydro-gamma-pyrone moiety, followed by pynD-catalyzed oxidation of the alcohol to the ketone and enolization to yield the characteristic tetramic acid-fused gamma-pyrone core of pyranonigrin H. Pyranonigrin H is substrate of pynH for dehydration-mediated exo-methylene formation from the serine side chain to produce pyranonigrin E, before the oxidase pynE reduces the exo-methylene of pyranonigrin E into a pendant methyl to form pyranonigrin G. The FAD-linked oxidoreductase pynB performs the reverse reaction and converts pyranonigrin G back to pyranonigrin E. The sequence is that of Oxidase pynE from Aspergillus niger (strain ATCC MYA-4892 / CBS 513.88 / FGSC A1513).